Here is a 349-residue protein sequence, read N- to C-terminus: S-adenosylmethionine:tRNA ribosyltransferase-isomerase (349 aa).

This sequence belongs to the QueA family. In terms of assembly, monomer.

It is found in the cytoplasm. The catalysed reaction is 7-aminomethyl-7-carbaguanosine(34) in tRNA + S-adenosyl-L-methionine = epoxyqueuosine(34) in tRNA + adenine + L-methionine + 2 H(+). The protein operates within tRNA modification; tRNA-queuosine biosynthesis. In terms of biological role, transfers and isomerizes the ribose moiety from AdoMet to the 7-aminomethyl group of 7-deazaguanine (preQ1-tRNA) to give epoxyqueuosine (oQ-tRNA). The polypeptide is S-adenosylmethionine:tRNA ribosyltransferase-isomerase (Ruegeria sp. (strain TM1040) (Silicibacter sp.)).